The following is a 161-amino-acid chain: uncharacterized protein (161 aa).

Residues 1-27 form the signal peptide; the sequence is MKKIGLLFMLCLAALFTIGFPAQQADA.

The protein resides in the secreted. This is an uncharacterized protein from Bacillus subtilis (strain 168).